Consider the following 439-residue polypeptide: AP-2 complex subunit mu (439 aa).

The region spanning 172-438 is the MHD domain; it reads RNELYIDVVE…LTKAGTYQNR (267 aa).

It belongs to the adaptor complexes medium subunit family. In terms of assembly, adaptor protein complex 2 (AP-2) is a heterotetramer composed of two large adaptins (alpha-type and beta-type subunits), a medium adaptin (mu-type subunit AP50) and a small adaptin (sigma-type subunit AP17). In terms of processing, phosphorylated.

The protein resides in the cell membrane. It localises to the membrane. The protein localises to the coated pit. Functionally, component of the adaptor complexes which link clathrin to receptors in coated vesicles. Clathrin-associated protein complexes are believed to interact with the cytoplasmic tails of membrane proteins, leading to their selection and concentration. AP50 is a subunit of the plasma membrane adaptor. The protein is AP-2 complex subunit mu (apm2) of Dictyostelium discoideum (Social amoeba).